Reading from the N-terminus, the 1175-residue chain is uncharacterized protein (1175 aa).

586-593 (GPAGTGKT) provides a ligand contact to ATP.

This is an uncharacterized protein from Methanocaldococcus jannaschii (strain ATCC 43067 / DSM 2661 / JAL-1 / JCM 10045 / NBRC 100440) (Methanococcus jannaschii).